The chain runs to 366 residues: Pyruvate dehydrogenase E1 component subunit beta, mitochondrial (366 aa).

A mitochondrion-targeting transit peptide spans 1–33; it reads MFSRLPTSLARNVARRAPTSFVRPSAAAAALRF. Residue Glu95 coordinates thiamine diphosphate. K(+) contacts are provided by Ala196, Ile197, Asp199, and Asn201.

In terms of assembly, pyruvate dehydrogenase (E1) is a tetramer of 2 alpha and 2 beta subunits. Eukaryotic pyruvate dehydrogenase (PDH) complexes are organized as a core consisting of the oligomeric dihydrolipoamide acetyl-transferase (E2), around which are arranged multiple copies of pyruvate dehydrogenase (E1), dihydrolipoamide dehydrogenase (E3) and protein X (E3BP) bound by non-covalent bonds. Thiamine diphosphate serves as cofactor.

Its subcellular location is the mitochondrion matrix. The catalysed reaction is N(6)-[(R)-lipoyl]-L-lysyl-[protein] + pyruvate + H(+) = N(6)-[(R)-S(8)-acetyldihydrolipoyl]-L-lysyl-[protein] + CO2. Functionally, the pyruvate dehydrogenase complex catalyzes the overall conversion of pyruvate to acetyl-CoA and CO(2). This chain is Pyruvate dehydrogenase E1 component subunit beta, mitochondrial (PDB1), found in Saccharomyces cerevisiae (strain ATCC 204508 / S288c) (Baker's yeast).